The sequence spans 24 residues: 47 kDa cell wall protein (24 aa).

The protein localises to the secreted. It localises to the cell wall. The chain is 47 kDa cell wall protein from Nicotiana tabacum (Common tobacco).